The sequence spans 363 residues: Molybdenum import ATP-binding protein ModC (363 aa).

Residues 1–232 (MLDLDLRRRQ…PGLRPLTGRY (232 aa)) enclose the ABC transporter domain. 30–37 (GRSGSGKT) contributes to the ATP binding site. The 67-residue stretch at 292–358 (RVSIRNVLPA…IKALTIARGD (67 aa)) folds into the Mop domain.

Belongs to the ABC transporter superfamily. Molybdate importer (TC 3.A.1.8) family. In terms of assembly, the complex is composed of two ATP-binding proteins (ModC), two transmembrane proteins (ModB) and a solute-binding protein (ModA).

The protein resides in the cell inner membrane. It carries out the reaction molybdate(out) + ATP + H2O = molybdate(in) + ADP + phosphate + H(+). In terms of biological role, part of the ABC transporter complex ModABC involved in molybdenum import. Responsible for energy coupling to the transport system. The polypeptide is Molybdenum import ATP-binding protein ModC (Paramagnetospirillum magneticum (strain ATCC 700264 / AMB-1) (Magnetospirillum magneticum)).